A 999-amino-acid chain; its full sequence is MQTERSLQSFSNRYTQIPFVYDVKRSVYNEENFQQEHRKKGPTSGNVDIDITTFKHHVQCGCSWHKFLRCMLTVFPFLEWICLYRFKDWLLGDLLAGLSVGLVQVPQGLILSLLTRQLIPPLNVTYAAFCSSVIYVIFGSCHQMSIGPFFLVSALMINVLKDRPFNNGHLILGTFVKDDFSVPTFYLSYNRSLSMVASTTFLTGIIQLSMGMLGMGFMATYLPEAATSAYLAAVALHIILAQMTCILGIMVSFHAGPISFIYNIINYCIALPKANSTSILLFITSVVALRINKCIRITFNRYPIEFPMELLLILGFSLLTSKITMATENSKMLMNMIPYSFVFPENPEFGILSRVVLQALSLSFVSSFLLISLGKKIANFHNYRTNSNQDLIAIGLCNLLSSFFKCCVFTGSLSRTTIQDKSGGRQQFASLVGAGVMLLLMVKMESFFHNLPNAVLAGIILSNVVPYLEAIYNLPSLWRQDQYECIIWMVTFSSAILLGLDVGLLISLAFTFFVITIRSHRTKILVLGQIPNTNIYRNVNDYREVILIPGVKIFQCCSSITFVNVYHLKQKVLKEVNMVKLPLKEEEIYTLFHESETSIAENKLCRCFCDCEELEPEIRVVYTERYENRQEQDSSINLIRCSYLGSGDSSQVTSEEQIPYTVSSTSQRNIVQSYEDTEKAWLPNSPPRNSPLPPPEASESLAQSRSRSIIMPYSDTSVQNNTHTIILDFSMVHYVDNRALVILRQMCNAFYNANILVLISGCHTSVVKSFEKNDFFDEGITKAQLFLSLHDAVLFALSRKFSEPSDLSMDETETVIQETYSESDKNGNLSNLRLKTGKAIIEGSQHASPGFTKNLKPGKDDLEFDLELDPMLSFEQSSGMDLNLDLDLDLDQSELDPGSELDSEIQAKPELELESELETDAQTEPETEEEPELEPEPEPEPETEPEPEPERERKTRTRSQSPWRNYFTAYRFGSSNSQSRAPPQTRPEKRKPHNYPNSP.

Residues 1 to 93 (MQTERSLQSF…YRFKDWLLGD (93 aa)) lie on the Cytoplasmic side of the membrane. Residues 94-114 (LLAGLSVGLVQVPQGLILSLL) form a helical membrane-spanning segment. Over 115 to 117 (TRQ) the chain is Extracellular. The chain crosses the membrane as a helical span at residues 118–138 (LIPPLNVTYAAFCSSVIYVIF). Residue Gly139 is a topological domain, cytoplasmic. The helical transmembrane segment at 140–160 (SCHQMSIGPFFLVSALMINVL) threads the bilayer. At 161 to 200 (KDRPFNNGHLILGTFVKDDFSVPTFYLSYNRSLSMVASTT) the chain is on the extracellular side. The N-linked (GlcNAc...) asparagine glycan is linked to Asn190. The helical transmembrane segment at 201–221 (FLTGIIQLSMGMLGMGFMATY) threads the bilayer. Topologically, residues 222–230 (LPEAATSAY) are cytoplasmic. Residues 231–251 (LAAVALHIILAQMTCILGIMV) form a helical membrane-spanning segment. The Extracellular segment spans residues 252 to 268 (SFHAGPISFIYNIINYC). Residues 269 to 289 (IALPKANSTSILLFITSVVAL) traverse the membrane as a helical segment. Topologically, residues 290 to 305 (RINKCIRITFNRYPIE) are cytoplasmic. The helical transmembrane segment at 306-326 (FPMELLLILGFSLLTSKITMA) threads the bilayer. Topologically, residues 327–354 (TENSKMLMNMIPYSFVFPENPEFGILSR) are extracellular. Residues 355-375 (VVLQALSLSFVSSFLLISLGK) form a helical membrane-spanning segment. Over 376 to 390 (KIANFHNYRTNSNQD) the chain is Cytoplasmic. Residues 391–411 (LIAIGLCNLLSSFFKCCVFTG) traverse the membrane as a helical segment. Residues 412-427 (SLSRTTIQDKSGGRQQ) are Extracellular-facing. A helical transmembrane segment spans residues 428-448 (FASLVGAGVMLLLMVKMESFF). Residues 449–453 (HNLPN) are Cytoplasmic-facing. Residues 454–474 (AVLAGIILSNVVPYLEAIYNL) traverse the membrane as a helical segment. Topologically, residues 475-494 (PSLWRQDQYECIIWMVTFSS) are extracellular. A helical transmembrane segment spans residues 495 to 515 (AILLGLDVGLLISLAFTFFVI). Residues 516-544 (TIRSHRTKILVLGQIPNTNIYRNVNDYRE) lie on the Cytoplasmic side of the membrane. Positions 541 to 796 (DYREVILIPG…LSLHDAVLFA (256 aa)) constitute an STAS domain. Residues 545–565 (VILIPGVKIFQCCSSITFVNV) traverse the membrane as a helical segment. Residues 566–999 (YHLKQKVLKE…RKPHNYPNSP (434 aa)) are Extracellular-facing. The interaction with RACGAP1 stretch occupies residues 661-999 (TVSSTSQRNI…RKPHNYPNSP (339 aa)). Disordered stretches follow at residues 678-701 (EKAW…SESL) and 893-999 (SELD…PNSP). Positions 684–696 (NSPPRNSPLPPPE) are enriched in pro residues. Acidic residues-rich tracts occupy residues 893-903 (SELDPGSELDS) and 912-947 (ELES…EPEP). Residues 973–982 (GSSNSQSRAP) are compositionally biased toward polar residues.

This sequence belongs to the SLC26A/SulP transporter (TC 2.A.53) family. As to quaternary structure, interacts with RACGAP1. Interacts with CFTR; stimulates anion transport activity of CFTR. In terms of processing, N-glycosylated. As to expression, expressed in testis and epididymis. Located at the end of the midpiece of the flagella, known as the annulus, in spermatozoa.

The protein resides in the membrane. The catalysed reaction is sulfate(out) + chloride(in) = sulfate(in) + chloride(out). It catalyses the reaction oxalate(in) + chloride(out) = oxalate(out) + chloride(in). Its function is as follows. Antiporter that mediates the exchange of sulfate and oxalate against chloride ions across a membrane. Stimulates anion transport activity of CFTR. May cooperate with CFTR in the regulation of chloride and bicarbonate ions fluxes required for activation of the ADCY10/PKA pathway during sperm motility and sperm capacitation. May play a role in sperm tail differentiation and motility and hence male fertility. The sequence is that of Testis anion transporter 1 from Mus musculus (Mouse).